The chain runs to 182 residues: MKKKLLFLGPPGAGKGTQANLFCKKYGLIHLSTGDLLRDEVSSGSVLGIKAAEIMNKGELVSDELVLSIVEGRLLNINEGWLLDGFPRNVNQANSLKDLLEKINQPLEGVILIKVADDYLIKRLVERGRQDDNEQVITNRLKIYREKTSPLIDLYKKQGILEEIEGNADIDVVFSCIEKSLG.

12 to 17 (GAGKGT) is a binding site for ATP. The segment at 32–61 (STGDLLRDEVSSGSVLGIKAAEIMNKGELV) is NMP. AMP-binding positions include Thr-33, Arg-38, 59-61 (ELV), 85-88 (GFPR), and Gln-92. The segment at 126–132 (ERGRQDD) is LID. Arg-127 is an ATP binding site. Residues Arg-129 and Arg-140 each contribute to the AMP site. Ala-168 is an ATP binding site.

This sequence belongs to the adenylate kinase family. As to quaternary structure, monomer.

Its subcellular location is the cytoplasm. It carries out the reaction AMP + ATP = 2 ADP. Its pathway is purine metabolism; AMP biosynthesis via salvage pathway; AMP from ADP: step 1/1. Its function is as follows. Catalyzes the reversible transfer of the terminal phosphate group between ATP and AMP. Plays an important role in cellular energy homeostasis and in adenine nucleotide metabolism. This is Adenylate kinase from Prochlorococcus marinus (strain NATL1A).